The following is a 381-amino-acid chain: Genome polyprotein (381 aa).

Residues 115–155 form a disordered region; the sequence is ANDTIDTGGNSKKDVKPEQGSIQPSSNKGKEKDVNAGTSGT.

It belongs to the potyviridae genome polyprotein family. In terms of processing, genome polyprotein of potyviruses undergoes post-translational proteolytic processing by the main proteinase NIa-pro resulting in the production of at least ten individual proteins. The P1 proteinase and the HC-pro cleave only their respective C-termini autocatalytically. 6K1 is essential for proper proteolytic separation of P3 from CI.

The protein localises to the virion. The enzyme catalyses RNA(n) + a ribonucleoside 5'-triphosphate = RNA(n+1) + diphosphate. In terms of biological role, an RNA-dependent RNA polymerase that plays an essential role in the virus replication. Involved in aphid transmission, cell-to-cell and systemis movement, encapsidation of the viral RNA and in the regulation of viral RNA amplification. The sequence is that of Genome polyprotein from Capsicum annuum (Capsicum pepper).